Consider the following 463-residue polypeptide: Hydroxyacid-oxoacid transhydrogenase, mitochondrial (463 aa).

It belongs to the iron-containing alcohol dehydrogenase family. Hydroxyacid-oxoacid transhydrogenase subfamily.

The protein localises to the mitochondrion. It catalyses the reaction (S)-3-hydroxybutanoate + 2-oxoglutarate = (R)-2-hydroxyglutarate + acetoacetate. It carries out the reaction 4-hydroxybutanoate + 2-oxoglutarate = (R)-2-hydroxyglutarate + succinate semialdehyde. Its function is as follows. Catalyzes the cofactor-independent reversible oxidation of gamma-hydroxybutyrate (GHB) to succinic semialdehyde (SSA) coupled to reduction of 2-ketoglutarate (2-KG) to D-2-hydroxyglutarate (D-2-HG). L-3-hydroxybutyrate (L-3-OHB) is also a substrate for HOT when using 2-KG as hydrogen acceptor, resulting in the formation of D-2-HG. The chain is Hydroxyacid-oxoacid transhydrogenase, mitochondrial (adhfe1) from Xenopus laevis (African clawed frog).